The primary structure comprises 389 residues: Probable transcription factor FL (389 aa).

Disordered stretches follow at residues Met-1–Pro-41 and Glu-140–Val-226. Residues Pro-19–Asn-39 show a composition bias toward pro residues. Over residues Val-159–Lys-180 the composition is skewed to basic residues. The Nuclear localization signal signature appears at Gly-161–Gly-168. Over residues Gln-190 to Gly-201 the composition is skewed to acidic residues. DNA-binding regions lie at residues Arg-221 to Phe-225, Asn-290 to Tyr-297, and Tyr-361 to Thr-364.

It belongs to the FLO/LFY family. In terms of assembly, interacts with APO1. In very young panicle but not in mature florets, mature leaves, roots or apical meristems.

The protein resides in the nucleus. Functionally, probable transcription factor. Together with APO1, involved in the temporal regulation of meristem size and identity during both vegetative and reproductive developments through interaction with APO1. Promotes flowering. This chain is Probable transcription factor FL, found in Oryza sativa subsp. japonica (Rice).